Consider the following 508-residue polypeptide: Tyrosine decarboxylase 4 (508 aa).

The residue at position 318 (Lys-318) is an N6-(pyridoxal phosphate)lysine.

The protein belongs to the group II decarboxylase family. Homodimer. The cofactor is pyridoxal 5'-phosphate.

The enzyme catalyses L-tyrosine + H(+) = tyramine + CO2. This Petroselinum crispum (Parsley) protein is Tyrosine decarboxylase 4 (TYRDC-4).